The following is a 249-amino-acid chain: RNA-free ribonuclease P (249 aa).

A disordered region spans residues 226 to 249 (NENEPEYENRDKSKEGSSGEIEFI). Basic and acidic residues predominate over residues 232–242 (YENRDKSKEGS).

The protein belongs to the HARP family.

It catalyses the reaction Endonucleolytic cleavage of RNA, removing 5'-extranucleotides from tRNA precursor.. In terms of biological role, RNA-free RNase P that catalyzes the removal of the 5'-leader sequence from pre-tRNA to produce the mature 5'-terminus. This is RNA-free ribonuclease P from Methanosarcina barkeri (strain Fusaro / DSM 804).